A 172-amino-acid polypeptide reads, in one-letter code: Small ribosomal subunit protein uS5 (172 aa).

An S5 DRBM domain is found at 17-80 (LREKMIAVNR…DEARRKMVKV (64 aa)).

The protein belongs to the universal ribosomal protein uS5 family. As to quaternary structure, part of the 30S ribosomal subunit. Contacts proteins S4 and S8.

With S4 and S12 plays an important role in translational accuracy. In terms of biological role, located at the back of the 30S subunit body where it stabilizes the conformation of the head with respect to the body. This chain is Small ribosomal subunit protein uS5, found in Ralstonia nicotianae (strain ATCC BAA-1114 / GMI1000) (Ralstonia solanacearum).